The primary structure comprises 143 residues: Hemoglobin cathodic subunit alpha (143 aa).

Residue Ser-2 is modified to N-acetylserine. In terms of domain architecture, Globin spans 2–143 (SLTAKDKSLI…LGAALSDKYR (142 aa)). His-60 is an O2 binding site. His-89 lines the heme b pocket.

It belongs to the globin family. In terms of assembly, heterotetramer of two alpha chains and two beta chains. Red blood cells.

Involved in oxygen transport from gills to the various peripheral tissues. This is Hemoglobin cathodic subunit alpha from Anguilla anguilla (European freshwater eel).